The primary structure comprises 989 residues: Voltage-gated delayed rectifier potassium channel KCNH1 (989 aa).

Residues 1 to 220 (MTMAGGRRGL…LHYCVFKTTW (220 aa)) are Cytoplasmic-facing. Residues 14–94 (QNTFLENIVR…QTFENYEMNS (81 aa)) form the PAS domain. In terms of domain architecture, PAC spans 93–145 (NSFEILMYKKNRTPVWFFVKIAPIRNEQDKVVLFLCTFSDITAFKQPIEDDSC). The tract at residues 151–162 (FARLTRALTSSR) is required for phosphatidylinositol bisphosphate binding. A helical transmembrane segment spans residues 221–241 (DWIILILTFYTAILVPYNVSF). The Extracellular portion of the chain corresponds to 242–248 (KTRQNNV). The helical transmembrane segment at 249 to 269 (AWLVVDSIVDVIFLVDIVLNF) threads the bilayer. Over 270-290 (HTTFVGPAGEVISDPKLIRMN) the chain is Cytoplasmic. Residues 291 to 309 (YLKTWFVIDLLSCLPYDVI) traverse the membrane as a helical segment. Residues 310 to 345 (NAFENVDEVSAFMGDPGKIGFADQIPPPLEGRESQG) lie on the Extracellular side of the membrane. A helical; Voltage-sensor transmembrane segment spans residues 346–368 (ISSLFSSLKVVRLLRLGRVARKL). At 369–377 (DHYIEYGAA) the chain is on the cytoplasmic side. Residues 378 to 399 (VLVLLVCVFGLAAHWMACIWYS) form a helical membrane-spanning segment. Over 400 to 448 (IGDYEIFDEDTKTIRNNSWLYQLAMDIGTPYQFNGSGSGKWEGGPSKNS) the chain is Extracellular. Residues asparagine 415 and asparagine 433 are each glycosylated (N-linked (GlcNAc...) asparagine). The segment at residues 449 to 470 (VYISSLYFTMTSLTSVGFGNIA) is an intramembrane region (pore-forming). Residues 463–468 (SVGFGN) carry the Selectivity filter motif. Residues 471–477 (PSTDIEK) lie on the Extracellular side of the membrane. Residues 478–498 (IFAVAIMMIGSLLYATIFGNV) form a helical membrane-spanning segment. At 499–989 (TTIFQQMYAN…ESERDIFGAS (491 aa)) the chain is on the cytoplasmic side. The calmodulin-binding stretch occupies residues 673-770 (KRDALQKVLE…LDDLDVEKGN (98 aa)). Residues 699–701 (YNL) form an interaction with cyclic nucleotide-binding pocket region. The span at 855–879 (KAESMETLPERTKASGEATLKKTDS) shows a compositional bias: basic and acidic residues. Disordered regions lie at residues 855–886 (KAESMETLPERTKASGEATLKKTDSCDSGITK) and 962–989 (RSSQSPQELFEISRPQSPESERDIFGAS). Positions 924-964 (ATVLEVRHELKEDIKALNAKMTNIEKQLSEILRILTSRRSS) are CAD (involved in subunit assembly). A phosphoserine mark is found at serine 974, serine 978, and serine 981. A compositionally biased stretch (basic and acidic residues) spans 980-989 (ESERDIFGAS).

It belongs to the potassium channel family. H (Eag) (TC 1.A.1.20) subfamily. Kv10.1/KCNH1 sub-subfamily. As to quaternary structure, homomultimer. The potassium channel is composed of a homo- or heterotetrameric complex of pore-forming alpha subunits that can associate with modulating beta subunits. Heteromultimer with KCNH5/EAG2. Interacts with ALG10B. Interacts with RABEP1. Interacts (via C-terminus) with CTTN. Interacts (via C-terminal cytoplasmic region) with Ca(2+)-bound calmodulin. Interacts with the spider kappa-theraphotoxin-Aa1a and mu/kappa-theraphotoxin-Ap1a. In terms of processing, channel activity is regulated via tyrosine phosphorylation/dephosphorylation by SRC and PTPN6. As to expression, highly expressed in brain and in myoblasts at the onset of fusion, but not in other tissues. Detected in HeLa (cervical carcinoma), SH-SY5Y (neuroblastoma) and MCF-7 (epithelial tumor) cells, but not in normal epithelial cells.

The protein localises to the cell membrane. It localises to the nucleus inner membrane. The protein resides in the cell projection. Its subcellular location is the dendrite. It is found in the axon. The protein localises to the presynaptic cell membrane. It localises to the perikaryon. The protein resides in the postsynaptic density membrane. Its subcellular location is the early endosome membrane. It carries out the reaction K(+)(in) = K(+)(out). With respect to regulation, channel activity is inhibited by interaction with Ca(2+)-bound calmodulin. Interaction of a single pore-forming alpha subunit with a calmodulin chain is sufficient to promote channel closure. Channel activity is not regulated by cyclic nucleotides. Channel activity is inhibited by binding intracellular phosphatidylinositol-3,5-bisphosphate and phosphatidylinositol-4,5-bisphosphate (PIP2), but is not inhibited by phosphatidylinositol 4-phosphate. Inhibited by the spider kappa-theraphotoxin-Aa1a and mu/kappa-theraphotoxin-Ap1a. Functionally, pore-forming (alpha) subunit of a voltage-gated delayed rectifier potassium channel that mediates outward-rectifying potassium currents which, on depolarization, reaches a steady-state level and do not inactivate. The activation kinetics depend on the prepulse potential and external divalent cation concentration. With negative prepulses, the current activation is delayed and slowed down several fold, whereas more positive prepulses speed up activation. The time course of activation is biphasic with a fast and a slowly activating current component. Activates at more positive membrane potentials and exhibit a steeper activation curve. Channel properties are modulated by subunit assembly. Mediates IK(NI) current in myoblasts. Involved in the regulation of cell proliferation and differentiation, in particular adipogenic and osteogenic differentiation in bone marrow-derived mesenchymal stem cells (MSCs). The sequence is that of Voltage-gated delayed rectifier potassium channel KCNH1 from Homo sapiens (Human).